Here is a 416-residue protein sequence, read N- to C-terminus: Nuclear hormone receptor family member nhr-67 (416 aa).

The nuclear receptor DNA-binding region spans 18–98 (DVDCRVCEDH…IGMNKDAVQH (81 aa)). 2 consecutive NR C4-type zinc fingers follow at residues 21 to 41 (CRVCEDHSSGKHYSIFSCDGC) and 57 to 86 (CKNKGSPSEGQCKVDKTHRNQCRACRLRKC). The interval 331–398 (KTETEEGEDI…SSRPRHSIRS (68 aa)) is disordered. The segment covering 335–346 (EEGEDIEEEDDA) has biased composition (acidic residues). Residues 377 to 390 (SSTQPSSASSPSSS) show a composition bias toward low complexity.

It belongs to the nuclear hormone receptor family. As to expression, expressed in linker cell.

It localises to the nucleus. Orphan nuclear receptor that binds DNA containing an extended core motif half-site sequence 5'-AAGTCA-3'. In males, plays an essential role in the migration of the linker cell which guides gonad elongation during the L3 and L4 stages of larval development by negatively regulating the expression of netrin receptor unc-5 at the mid-L3 stage. Involved in the regulation of non-apoptotic cell death in the linker cell, acting upstream of or in parallel to transcription factor hsf-1. Represses hypoxia response genes, fmo-2 and acs-2, in both normoxic and hypoxic conditions, probably acting via repression of nuclear receptor nhr-49. This chain is Nuclear hormone receptor family member nhr-67 (nhr-67), found in Caenorhabditis elegans.